The sequence spans 338 residues: Uroporphyrinogen decarboxylase (338 aa).

Substrate is bound by residues 25–29 (RQAGR), Phe44, Asp75, Tyr146, Ser201, and His314.

This sequence belongs to the uroporphyrinogen decarboxylase family. In terms of assembly, homodimer.

Its subcellular location is the cytoplasm. The catalysed reaction is uroporphyrinogen III + 4 H(+) = coproporphyrinogen III + 4 CO2. The protein operates within porphyrin-containing compound metabolism; protoporphyrin-IX biosynthesis; coproporphyrinogen-III from 5-aminolevulinate: step 4/4. Functionally, catalyzes the decarboxylation of four acetate groups of uroporphyrinogen-III to yield coproporphyrinogen-III. The protein is Uroporphyrinogen decarboxylase of Aquifex aeolicus (strain VF5).